The sequence spans 698 residues: Polyphosphate kinase (698 aa).

N63 provides a ligand contact to ATP. Positions 390 and 420 each coordinate Mg(2+). The active-site Phosphohistidine intermediate is the H450. ATP-binding residues include Y483, R579, and H607.

The protein belongs to the polyphosphate kinase 1 (PPK1) family. Requires Mg(2+) as cofactor. Post-translationally, an intermediate of this reaction is the autophosphorylated ppk in which a phosphate is covalently linked to a histidine residue through a N-P bond.

It carries out the reaction [phosphate](n) + ATP = [phosphate](n+1) + ADP. Its function is as follows. Catalyzes the reversible transfer of the terminal phosphate of ATP to form a long-chain polyphosphate (polyP). The chain is Polyphosphate kinase from Xylella fastidiosa (strain 9a5c).